We begin with the raw amino-acid sequence, 89 residues long: Putative membrane protein insertion efficiency factor (89 aa).

This sequence belongs to the UPF0161 family.

The protein localises to the cell inner membrane. Its function is as follows. Could be involved in insertion of integral membrane proteins into the membrane. The protein is Putative membrane protein insertion efficiency factor of Petrotoga mobilis (strain DSM 10674 / SJ95).